We begin with the raw amino-acid sequence, 200 residues long: Chromophore lyase CpcS/CpeS (200 aa).

Belongs to the CpcS/CpeS biliprotein lyase family.

In terms of biological role, covalently attaches a chromophore to Cys residue(s) of phycobiliproteins. This is Chromophore lyase CpcS/CpeS from Synechococcus sp. (strain WH8020).